Here is a 371-residue protein sequence, read N- to C-terminus: Homeobox protein Nkx-2.1 (371 aa).

A DNA-binding region (homeobox) is located at residues 161–220 (RRKRRVLFSQAQVYELERRFKQQKYLSAPEREHLASMIHLTPTQVKIWFQNHRYKMKRQA). Disordered regions lie at residues 219–294 (QAKD…QHQA) and 310–339 (GAGL…SPAA). The segment covering 233-243 (SGGGGGGGGTG) has biased composition (gly residues). Positions 244–253 (CPQQQQAQQQ) are enriched in low complexity. S254 is subject to Phosphoserine. The span at 272–294 (AGAPAPGAASLQGHAQQQAQHQA) shows a compositional bias: low complexity.

It belongs to the NK-2 homeobox family. As to quaternary structure, interacts with WWTR1. In terms of processing, phosphorylated on serine residues by STK3/MST2. In terms of tissue distribution, thyroid and lung.

It is found in the nucleus. Transcription factor that binds and activates the promoter of thyroid specific genes such as thyroglobulin, thyroperoxidase, and thyrotropin receptor. Crucial in the maintenance of the thyroid differentiation phenotype. May play a role in lung development and surfactant homeostasis. Forms a regulatory loop with GRHL2 that coordinates lung epithelial cell morphogenesis and differentiation. Activates the transcription of GNRHR and plays a role in enhancing the circadian oscillation of its gene expression. Represses the transcription of the circadian transcriptional repressor NR1D1. The protein is Homeobox protein Nkx-2.1 of Homo sapiens (Human).